The sequence spans 202 residues: Imidazoleglycerol-phosphate dehydratase (202 aa).

Belongs to the imidazoleglycerol-phosphate dehydratase family.

The protein localises to the cytoplasm. The catalysed reaction is D-erythro-1-(imidazol-4-yl)glycerol 3-phosphate = 3-(imidazol-4-yl)-2-oxopropyl phosphate + H2O. The protein operates within amino-acid biosynthesis; L-histidine biosynthesis; L-histidine from 5-phospho-alpha-D-ribose 1-diphosphate: step 6/9. This chain is Imidazoleglycerol-phosphate dehydratase, found in Corynebacterium diphtheriae (strain ATCC 700971 / NCTC 13129 / Biotype gravis).